Here is an 87-residue protein sequence, read N- to C-terminus: Large ribosomal subunit protein bL31B (87 aa).

Belongs to the bacterial ribosomal protein bL31 family. Type B subfamily. In terms of assembly, part of the 50S ribosomal subunit.

The polypeptide is Large ribosomal subunit protein bL31B (Corynebacterium kroppenstedtii (strain DSM 44385 / JCM 11950 / CIP 105744 / CCUG 35717)).